Reading from the N-terminus, the 132-residue chain is Dormancy-associated protein 1 (132 aa).

The disordered stretch occupies residues 53-76; the sequence is MPAAVSPGTPTTPTTPTTPRKDNV. Positions 61 to 70 are enriched in low complexity; that stretch reads TPTTPTTPTT. Threonine 64 carries the phosphothreonine modification.

The protein belongs to the DRM1/ARP family. In terms of tissue distribution, isoform 1: Expressed mainly in the low bolt. Isoform 2: Expressed mainly in the low bolt. Detected in flowers. Isoform 4: Expressed mainly in the low bolt. Isoform 5: Expressed mainly in the 6 days old seedlings. Detected in 16 days old seedlings, axil, low bolt and floral samples, but only barely in leaves and top bolt.

The chain is Dormancy-associated protein 1 from Arabidopsis thaliana (Mouse-ear cress).